The chain runs to 174 residues: Variant surface antigen B (174 aa).

Residues 1 to 29 (MKKSIFSKKLLVSFGSLVALASIPLIAIS) form the signal peptide. Cys-30 is lipidated: N-palmitoyl cysteine. Cys-30 is lipidated: S-diacylglycerol cysteine. The segment at 32–174 (QTNTDKSQQP…SQDSGNGSTK (143 aa)) is disordered. Over residues 38-49 (SQQPGSGSSTSG) the composition is skewed to low complexity. Residues 50–75 (GQSGTGLGSGTTTGGQSGTTTGGRSG) show a composition bias toward gly residues. Residues 76-97 (SGSSSSTTGGQTGTGSDSQDSG) show a composition bias toward low complexity. 7 repeat units span residues 88–99 (GTGSDSQDSGAK), 100–111 (GTGSDSQDSGAK), 112–123 (GTGSDSQDSGAK), 124–135 (GTGSDSQDSGAK), 136–147 (GTGSDSQDSGAK), 148–159 (GTGSDSQDSGAK), and 160–171 (GTGSDSQDSGNG). The tract at residues 88–171 (GTGSDSQDSG…GSDSQDSGNG (84 aa)) is 7 X 12 AA tandem repeats. Positions 102-174 (GSDSQDSGAK…SQDSGNGSTK (73 aa)) are enriched in polar residues.

It localises to the cell membrane. Its function is as follows. Responsible for the antigenic diversity for host adaptation. The chain is Variant surface antigen B (vlpB) from Mesomycoplasma hyorhinis (Mycoplasma hyorhinis).